The chain runs to 1149 residues: Structural maintenance of chromosomes protein 6 homolog smc-6 (1149 aa).

77–84 (GPNGSGKS) is a binding site for ATP. Positions 309–460 (LQDETKKEYA…EEEKYTIQRD (152 aa)) form a coiled coil. The tract at residues 461–687 (INQLRRKIEQ…DVDEGALARL (227 aa)) is flexible hinge. A coiled-coil region spans residues 714–920 (YNERDQTKAA…AVDRATVGCD (207 aa)). Disordered regions lie at residues 875–900 (NDKK…STTE) and 1026–1060 (EVDE…VRDL). Positions 1026–1038 (EVDEHSYDDDSDD) are enriched in acidic residues. The segment covering 1042–1058 (PRRKKSKKSGQKKKRVR) has biased composition (basic residues).

The protein belongs to the SMC family. SMC6 subfamily. In terms of assembly, interacts with smc-5. As to expression, expressed in the germline (at protein level).

The protein resides in the nucleus. The protein localises to the chromosome. Its function is as follows. Core component of the smc-5/smc-6 complex. Involved in DNA double-strand break repair by promoting sister-chromatid homologous recombination during meiosis. Also plays a role in the DNA damage repair of ultraviolet (UV) radiation-induced DNA lesions. Promotes efficient DNA replication. This is Structural maintenance of chromosomes protein 6 homolog smc-6 from Caenorhabditis elegans.